Consider the following 484-residue polypeptide: BPI fold-containing family B member 1 (484 aa).

Residues 1–21 form the signal peptide; the sequence is MAGPWTFTLLCGLLAATLIQA. N48 carries N-linked (GlcNAc...) asparagine glycosylation. C158 and C201 form a disulfide bridge. N-linked (GlcNAc...) asparagine glycosylation is found at N264 and N401.

The protein belongs to the BPI/LBP/Plunc superfamily. Plunc family. As to expression, detected in duodenum mucosal crypts of cholera patients, near Paneth cells (at protein level). Detected in trachea, nasal septal epithelium and lung.

The protein resides in the secreted. May play a role in innate immunity in mouth, nose and lungs. Binds bacterial lipopolysaccharide (LPS) and modulates the cellular responses to LPS. The sequence is that of BPI fold-containing family B member 1 (BPIFB1) from Homo sapiens (Human).